The chain runs to 196 residues: NADH-quinone oxidoreductase subunit B (196 aa).

[4Fe-4S] cluster-binding residues include Cys-63, Cys-64, Cys-129, and Cys-159.

It belongs to the complex I 20 kDa subunit family. NDH-1 is composed of 14 different subunits. Subunits NuoB, C, D, E, F, and G constitute the peripheral sector of the complex. The cofactor is [4Fe-4S] cluster.

The protein localises to the cell inner membrane. The enzyme catalyses a quinone + NADH + 5 H(+)(in) = a quinol + NAD(+) + 4 H(+)(out). In terms of biological role, NDH-1 shuttles electrons from NADH, via FMN and iron-sulfur (Fe-S) centers, to quinones in the respiratory chain. The immediate electron acceptor for the enzyme in this species is believed to be a menaquinone. Couples the redox reaction to proton translocation (for every two electrons transferred, four hydrogen ions are translocated across the cytoplasmic membrane), and thus conserves the redox energy in a proton gradient. This Bacteroides fragilis (strain ATCC 25285 / DSM 2151 / CCUG 4856 / JCM 11019 / LMG 10263 / NCTC 9343 / Onslow / VPI 2553 / EN-2) protein is NADH-quinone oxidoreductase subunit B.